The primary structure comprises 620 residues: 1-deoxy-D-xylulose-5-phosphate synthase (620 aa).

Thiamine diphosphate contacts are provided by residues His75 and 116-118 (AHS). Residue Asp147 coordinates Mg(2+). Residues 148 to 149 (GA), Asn177, Tyr284, and Glu366 each bind thiamine diphosphate. Asn177 is a binding site for Mg(2+).

Belongs to the transketolase family. DXPS subfamily. As to quaternary structure, homodimer. Mg(2+) serves as cofactor. The cofactor is thiamine diphosphate.

It carries out the reaction D-glyceraldehyde 3-phosphate + pyruvate + H(+) = 1-deoxy-D-xylulose 5-phosphate + CO2. It functions in the pathway metabolic intermediate biosynthesis; 1-deoxy-D-xylulose 5-phosphate biosynthesis; 1-deoxy-D-xylulose 5-phosphate from D-glyceraldehyde 3-phosphate and pyruvate: step 1/1. Catalyzes the acyloin condensation reaction between C atoms 2 and 3 of pyruvate and glyceraldehyde 3-phosphate to yield 1-deoxy-D-xylulose-5-phosphate (DXP). The protein is 1-deoxy-D-xylulose-5-phosphate synthase of Bordetella bronchiseptica (strain ATCC BAA-588 / NCTC 13252 / RB50) (Alcaligenes bronchisepticus).